Here is a 235-residue protein sequence, read N- to C-terminus: Vacuolar protein sorting-associated protein 60.2 (235 aa).

The disordered stretch occupies residues 1–30 (MKRIFGAKNNKEPPPSIQDASDRINKRGDS). A compositionally biased stretch (basic and acidic residues) spans 20-30 (ASDRINKRGDS). Residues 99 to 148 (LKDAQQTMTALKSANKELKGMMKTVKIQDIDNLQDDMMDLMDESSEIQET) are a coiled coil. A disordered region spans residues 174 to 235 (DMGNETEADG…PAVPRASLRG (62 aa)).

It belongs to the SNF7 family.

Its subcellular location is the endosome. It is found in the multivesicular body membrane. Probable peripherally associated component of the endosomal sorting required for transport complex III (ESCRT-III) which is involved in multivesicular bodies (MVBs) formation and sorting of endosomal cargo proteins into MVBs. The polypeptide is Vacuolar protein sorting-associated protein 60.2 (Arabidopsis thaliana (Mouse-ear cress)).